Consider the following 355-residue polypeptide: Peptide chain release factor 1 (355 aa).

Residue glutamine 233 is modified to N5-methylglutamine. Over residues 280 to 293 the composition is skewed to basic and acidic residues; that stretch reads ERRKKEQERADSRR. Residues 280 to 308 form a disordered region; it reads ERRKKEQERADSRRGQVGSGDRSERIRTY.

It belongs to the prokaryotic/mitochondrial release factor family. Post-translationally, methylated by PrmC. Methylation increases the termination efficiency of RF1.

It is found in the cytoplasm. Peptide chain release factor 1 directs the termination of translation in response to the peptide chain termination codons UAG and UAA. The protein is Peptide chain release factor 1 of Rickettsia felis (strain ATCC VR-1525 / URRWXCal2) (Rickettsia azadi).